Consider the following 207-residue polypeptide: NKYCNIKCSKVAHTVCQTGESTKPSSKNCAKVSITSVGVTEEEKKLIVDEHNRFRQKVAQGLETRGNPGPQPAASDMNNLVWNDELAYIAQVWASQCQFFVHDKCRNTAQYQVGQNIAYSASTAAYPGVVKLIVLWENEVKDFNYNTGITKENFAKVGHYTQVVWAKTKEVGCGSIKYIEKGMKSHYLVCNYGPAGNVLGAQIYEIK.

3 disulfide bridges follow: Cys-4-Cys-16, Cys-8-Cys-105, and Cys-29-Cys-97. Residues 49–192 (DEHNRFRQKV…MKSHYLVCNY (144 aa)) enclose the SCP domain. Tyr-111 is subject to Phosphotyrosine. An N-linked (Glc) (glycation) lysine glycan is attached at Lys-141. An intrachain disulfide couples Cys-173 to Cys-190.

It belongs to the CRISP family. Venom allergen 5-like subfamily. Post-translationally, glycosylated. Expressed by the venom gland.

The protein resides in the secreted. This chain is Venom allergen 5, found in Polybia paulista (Neotropical social wasp).